The chain runs to 265 residues: Leucyl/phenylalanyl-tRNA--protein transferase (265 aa).

Residues 244-265 (LDTGPDPASSSVTEISLRPAAP) are disordered.

This sequence belongs to the L/F-transferase family.

It localises to the cytoplasm. It catalyses the reaction N-terminal L-lysyl-[protein] + L-leucyl-tRNA(Leu) = N-terminal L-leucyl-L-lysyl-[protein] + tRNA(Leu) + H(+). It carries out the reaction N-terminal L-arginyl-[protein] + L-leucyl-tRNA(Leu) = N-terminal L-leucyl-L-arginyl-[protein] + tRNA(Leu) + H(+). The catalysed reaction is L-phenylalanyl-tRNA(Phe) + an N-terminal L-alpha-aminoacyl-[protein] = an N-terminal L-phenylalanyl-L-alpha-aminoacyl-[protein] + tRNA(Phe). Functions in the N-end rule pathway of protein degradation where it conjugates Leu, Phe and, less efficiently, Met from aminoacyl-tRNAs to the N-termini of proteins containing an N-terminal arginine or lysine. The sequence is that of Leucyl/phenylalanyl-tRNA--protein transferase from Methylibium petroleiphilum (strain ATCC BAA-1232 / LMG 22953 / PM1).